Reading from the N-terminus, the 333-residue chain is Leucine carboxyl methyltransferase 1 (333 aa).

S-adenosyl-L-methionine-binding positions include Arg-79, Gly-108, Asp-131, 180 to 181 (NV), and Glu-206.

It belongs to the methyltransferase superfamily. LCMT family.

It carries out the reaction [phosphatase 2A protein]-C-terminal L-leucine + S-adenosyl-L-methionine = [phosphatase 2A protein]-C-terminal L-leucine methyl ester + S-adenosyl-L-homocysteine. Methylates the carboxyl group of the C-terminal leucine residue of protein phosphatase 2A catalytic subunits to form alpha-leucine ester residues. The polypeptide is Leucine carboxyl methyltransferase 1 (PPM1) (Kluyveromyces lactis (strain ATCC 8585 / CBS 2359 / DSM 70799 / NBRC 1267 / NRRL Y-1140 / WM37) (Yeast)).